We begin with the raw amino-acid sequence, 112 residues long: MTYVVTDNCIACKYTDCVEVCPVDCFYEGENTLVIHPDECIDCGVCEPECPADAIRPDTEPGMEDWVEFNRTYASQWPVITIKKDPMPDHKKYDGETGKREKYFSPNPGTGD.

2 consecutive 4Fe-4S ferredoxin-type domains span residues 2 to 30 and 31 to 60; these read TYVVTDNCIACKYTDCVEVCPVDCFYEGE and NTLVIHPDECIDCGVCEPECPADAIRPDTE. Positions 9 and 17 each coordinate [3Fe-4S] cluster. Residues cysteine 21, cysteine 40, cysteine 43, and cysteine 46 each coordinate [4Fe-4S] cluster. Cysteine 50 provides a ligand contact to [3Fe-4S] cluster. Basic and acidic residues predominate over residues 85–103; the sequence is DPMPDHKKYDGETGKREKY. Residues 85–112 are disordered; the sequence is DPMPDHKKYDGETGKREKYFSPNPGTGD.

Requires [4Fe-4S] cluster as cofactor. It depends on [3Fe-4S] cluster as a cofactor.

In terms of biological role, ferredoxins are iron-sulfur proteins that transfer electrons in a wide variety of metabolic reactions. The sequence is that of Ferredoxin-2 (fdxA) from Rhodobacter capsulatus (strain ATCC BAA-309 / NBRC 16581 / SB1003).